The following is a 1413-amino-acid chain: GTPase-activating protein and VPS9 domain-containing protein 1 (1413 aa).

One can recognise a Ras-GAP domain in the interval 147–385; the sequence is SYLLQVLRYL…AAFLDVVIGG (239 aa). A Phosphoserine modification is found at serine 227. 2 positions are modified to phosphothreonine: threonine 390 and threonine 458. Disordered regions lie at residues 448-474, 540-587, 718-799, and 826-852; these read KPGKSSSLEMTPYSTPQLSPAATPANK, LSDG…GSNG, ESCS…PPSQ, and HYARPSHPPPDPPILEGAVGGNEARLP. The segment covering 451 to 467 has biased composition (polar residues); that stretch reads KSSSLEMTPYSTPQLSP. Tyrosine 460 carries the post-translational modification Phosphotyrosine. The residue at position 466 (serine 466) is a Phosphoserine. Position 470 is a phosphothreonine (threonine 470). Residues serine 721, serine 725, and serine 736 each carry the phosphoserine modification. Residues 737-756 show a composition bias toward polar residues; sequence SRPSTPGLSVVSGISATSED. Threonine 741 is subject to Phosphothreonine. Phosphoserine is present on serine 745. Residues 757 to 768 are compositionally biased toward basic and acidic residues; sequence IPNKIEDLRSEC. Serine 856, serine 882, serine 883, serine 888, serine 894, serine 946, serine 972, and serine 999 each carry phosphoserine. The segment covering 871–882 has biased composition (basic and acidic residues); sequence HSYPERLVRSRS. A disordered region spans residues 871-957; the sequence is HSYPERLVRS…DEKSDRNRPW (87 aa). A compositionally biased stretch (low complexity) spans 883–897; it reads SDVVSSVRRPMSDPS. The segment covering 934 to 955 has biased composition (basic and acidic residues); the sequence is DSSRGETEERKDSDDEKSDRNR. Residues 1011 to 1049 are disordered; sequence VMGDGESAHDSPRDETLQNISADDLPDSASQAAHPQDSA. The segment covering 1016–1026 has biased composition (basic and acidic residues); sequence ESAHDSPRDET. Phosphoserine occurs at positions 1031 and 1038. Positions 1273–1413 constitute a VPS9 domain; it reads ILRDQVLHEH…EFIKTIDDRK (141 aa).

This sequence belongs to the GAPVD1 family. As to quaternary structure, interacts with TRIP10/CIP4. Interacts with RAB5A.

The protein resides in the membrane. Its subcellular location is the endosome. In terms of biological role, acts both as a GTPase-activating protein (GAP) and a guanine nucleotide exchange factor (GEF), and participates in various processes such as endocytosis, insulin receptor internalization or LC2A4/GLUT4 trafficking. Acts as a GEF for the Ras-related protein RAB31 by exchanging bound GDP for free GTP, leading to regulate LC2A4/GLUT4 trafficking. In the absence of insulin, it maintains RAB31 in an active state and promotes a futile cycle between LC2A4/GLUT4 storage vesicles and early endosomes, retaining LC2A4/GLUT4 inside the cells. Upon insulin stimulation, it is translocated to the plasma membrane, releasing LC2A4/GLUT4 from intracellular storage vesicles. Also involved in EGFR trafficking and degradation, possibly by promoting EGFR ubiquitination and subsequent degradation by the proteasome. Has GEF activity for Rab5 and GAP activity for Ras. In Bos taurus (Bovine), this protein is GTPase-activating protein and VPS9 domain-containing protein 1 (GAPVD1).